A 424-amino-acid polypeptide reads, in one-letter code: Serine--tRNA ligase (424 aa).

231–233 (TAE) contributes to the L-serine binding site. Residues 262–264 (RRE) and Val278 contribute to the ATP site. Residue Glu285 participates in L-serine binding. 349 to 352 (EVSS) is a binding site for ATP. Ser384 contacts L-serine.

The protein belongs to the class-II aminoacyl-tRNA synthetase family. Type-1 seryl-tRNA synthetase subfamily. As to quaternary structure, homodimer. The tRNA molecule binds across the dimer.

The protein resides in the cytoplasm. The enzyme catalyses tRNA(Ser) + L-serine + ATP = L-seryl-tRNA(Ser) + AMP + diphosphate + H(+). It carries out the reaction tRNA(Sec) + L-serine + ATP = L-seryl-tRNA(Sec) + AMP + diphosphate + H(+). The protein operates within aminoacyl-tRNA biosynthesis; selenocysteinyl-tRNA(Sec) biosynthesis; L-seryl-tRNA(Sec) from L-serine and tRNA(Sec): step 1/1. Its function is as follows. Catalyzes the attachment of serine to tRNA(Ser). Is also able to aminoacylate tRNA(Sec) with serine, to form the misacylated tRNA L-seryl-tRNA(Sec), which will be further converted into selenocysteinyl-tRNA(Sec). The sequence is that of Serine--tRNA ligase from Chlamydia abortus (strain DSM 27085 / S26/3) (Chlamydophila abortus).